The following is a 184-amino-acid chain: Large ribosomal subunit protein uL6 (184 aa).

It belongs to the universal ribosomal protein uL6 family. Part of the 50S ribosomal subunit.

In terms of biological role, this protein binds to the 23S rRNA, and is important in its secondary structure. It is located near the subunit interface in the base of the L7/L12 stalk, and near the tRNA binding site of the peptidyltransferase center. This Thermosipho melanesiensis (strain DSM 12029 / CIP 104789 / BI429) protein is Large ribosomal subunit protein uL6.